A 229-amino-acid chain; its full sequence is Uracil-DNA glycosylase (229 aa).

The active-site Proton acceptor is the Asp71.

It belongs to the uracil-DNA glycosylase (UDG) superfamily. UNG family.

It localises to the cytoplasm. It catalyses the reaction Hydrolyzes single-stranded DNA or mismatched double-stranded DNA and polynucleotides, releasing free uracil.. Excises uracil residues from the DNA which can arise as a result of misincorporation of dUMP residues by DNA polymerase or due to deamination of cytosine. The chain is Uracil-DNA glycosylase from Campylobacter lari (strain RM2100 / D67 / ATCC BAA-1060).